A 433-amino-acid chain; its full sequence is Cyclin-dependent kinase F-3 (433 aa).

Residues 4-283 (YKVIREIGDG…AEQSLQHPFF (280 aa)) form the Protein kinase domain. Residues 10 to 18 (IGDGTCGNV) and lysine 33 each bind ATP. Aspartate 125 serves as the catalytic Proton acceptor. Residue serine 151 is modified to Phosphoserine. Residue threonine 156 is modified to Phosphothreonine.

This sequence belongs to the protein kinase superfamily. CMGC Ser/Thr protein kinase family. CDC2/CDKX subfamily.

The catalysed reaction is L-seryl-[protein] + ATP = O-phospho-L-seryl-[protein] + ADP + H(+). It carries out the reaction L-threonyl-[protein] + ATP = O-phospho-L-threonyl-[protein] + ADP + H(+). The enzyme catalyses [DNA-directed RNA polymerase] + ATP = phospho-[DNA-directed RNA polymerase] + ADP + H(+). This chain is Cyclin-dependent kinase F-3 (CDKF-3), found in Oryza sativa subsp. japonica (Rice).